The following is a 140-amino-acid chain: Nucleoside diphosphate kinase (140 aa).

Residues Lys-11, Phe-59, Arg-87, Thr-93, Arg-104, and Asn-114 each contribute to the ATP site. His-117 (pros-phosphohistidine intermediate) is an active-site residue.

This sequence belongs to the NDK family. As to quaternary structure, homotetramer. Mg(2+) serves as cofactor.

It is found in the cytoplasm. It carries out the reaction a 2'-deoxyribonucleoside 5'-diphosphate + ATP = a 2'-deoxyribonucleoside 5'-triphosphate + ADP. It catalyses the reaction a ribonucleoside 5'-diphosphate + ATP = a ribonucleoside 5'-triphosphate + ADP. Functionally, major role in the synthesis of nucleoside triphosphates other than ATP. The ATP gamma phosphate is transferred to the NDP beta phosphate via a ping-pong mechanism, using a phosphorylated active-site intermediate. In Rhodopseudomonas palustris (strain ATCC BAA-98 / CGA009), this protein is Nucleoside diphosphate kinase.